The sequence spans 191 residues: UPF0398 protein LCABL_17010 (191 aa).

It belongs to the UPF0398 family.

The protein is UPF0398 protein LCABL_17010 of Lacticaseibacillus casei (strain BL23) (Lactobacillus casei).